We begin with the raw amino-acid sequence, 889 residues long: Extended synaptotagmin-3 (889 aa).

The tract at residues 1 to 65 (MAQGDPGGQT…GPRDPGQGGA (65 aa)) is disordered. Topologically, residues 1–66 (MAQGDPGGQT…PRDPGQGGAG (66 aa)) are cytoplasmic. 2 stretches are compositionally biased toward basic and acidic residues: residues 17–28 (TDKKPDEPKATE) and 41–58 (PGGEKGLRDPPGGEKGPR). 2 helical membrane-spanning segments follow: residues 67–91 (EALAEALYGLGRPVLRAVLYLFPVY) and 92–112 (LCGRFGLSPTWLLFGLFLWMF). Residues 113-889 (WTRNKKFKLA…ELTPTGLPTS (777 aa)) are Cytoplasmic-facing. One can recognise an SMP-LTD domain in the interval 155-333 (DVERVEWLNK…LPNRFTVPLS (179 aa)). 2 C2 domains span residues 331–452 (PLSS…DEWF) and 468–618 (WLSL…STIK). K363, D364, D376, D423, E424, D425, D427, D429, and D430 together coordinate Ca(2+). Positions 649–724 (SIKRAQSQQH…GAVPESHTPS (76 aa)) are disordered. The span at 658–671 (HKSHGKSHQAHHQA) shows a compositional bias: basic residues. Low complexity-rich tracts occupy residues 672-682 (HQTQQNHTVQQ) and 691-714 (ISTTSQQANTSSSNPAPNQNPNST). The region spanning 757–879 (MTGEVEVSVR…DLVKGFTKWF (123 aa)) is the C2 3 domain. Positions 804–811 (RKWSGRKK) are required for phosphatidylinositol 4,5-bisphosphate-dependent location at the cell membrane.

This sequence belongs to the extended synaptotagmin family.

It localises to the cell membrane. Its subcellular location is the endoplasmic reticulum membrane. Tethers the endoplasmic reticulum to the cell membrane and promotes the formation of appositions between the endoplasmic reticulum and the cell membrane. Binds glycerophospholipids in a barrel-like domain and may play a role in cellular lipid transport. The sequence is that of Extended synaptotagmin-3 (esyt3) from Xenopus tropicalis (Western clawed frog).